The following is a 669-amino-acid chain: Major S-layer protein (669 aa).

The signal sequence occupies residues 1-24 (MKRFAAVSLAALMLLTVFASAASA). Residues Asn-36, Asn-70, Asn-116, Asn-600, and Asn-607 are each glycosylated (N-linked (GlcNAc...) asparagine). Residues 588–648 (DGEVVDDDED…PTEADGTTPG (61 aa)) form a disordered region. A compositionally biased stretch (acidic residues) spans 590–627 (EVVDDDEDDDNVTEPVDNDTEVEEPTEEPTEGPTEEPT). Residues 645-665 (TTPGFGVVLGLVGLLAVVYLV) form a helical membrane-spanning segment.

This sequence belongs to the Methanosarcinales S-layer protein family. In terms of processing, glycosylated.

It localises to the secreted. The protein resides in the cell wall. It is found in the S-layer. The protein localises to the cell membrane. Functionally, S-layer protein. The S-layer is a paracrystalline mono-layered assembly of proteins which coat the surface of the cell. This chain is Major S-layer protein, found in Methanosarcina mazei (strain ATCC BAA-159 / DSM 3647 / Goe1 / Go1 / JCM 11833 / OCM 88) (Methanosarcina frisia).